Consider the following 257-residue polypeptide: Deoxyribose-phosphate aldolase (257 aa).

Asp102 functions as the Proton donor/acceptor in the catalytic mechanism. Lys166 functions as the Schiff-base intermediate with acetaldehyde in the catalytic mechanism. Residue Lys198 is the Proton donor/acceptor of the active site.

It belongs to the DeoC/FbaB aldolase family. DeoC type 2 subfamily.

The protein localises to the cytoplasm. It carries out the reaction 2-deoxy-D-ribose 5-phosphate = D-glyceraldehyde 3-phosphate + acetaldehyde. The protein operates within carbohydrate degradation; 2-deoxy-D-ribose 1-phosphate degradation; D-glyceraldehyde 3-phosphate and acetaldehyde from 2-deoxy-alpha-D-ribose 1-phosphate: step 2/2. Functionally, catalyzes a reversible aldol reaction between acetaldehyde and D-glyceraldehyde 3-phosphate to generate 2-deoxy-D-ribose 5-phosphate. The sequence is that of Deoxyribose-phosphate aldolase from Shewanella piezotolerans (strain WP3 / JCM 13877).